Reading from the N-terminus, the 456-residue chain is Trigger factor (456 aa).

Residues 192 to 277 (GDTVVIDFVG…IHEVKTKEVP (86 aa)) enclose the PPIase FKBP-type domain.

Belongs to the FKBP-type PPIase family. Tig subfamily.

Its subcellular location is the cytoplasm. The enzyme catalyses [protein]-peptidylproline (omega=180) = [protein]-peptidylproline (omega=0). Its function is as follows. Involved in protein export. Acts as a chaperone by maintaining the newly synthesized protein in an open conformation. Functions as a peptidyl-prolyl cis-trans isomerase. This Streptococcus pyogenes serotype M4 (strain MGAS10750) protein is Trigger factor.